We begin with the raw amino-acid sequence, 257 residues long: Pyrroline-5-carboxylate reductase (257 aa).

The protein belongs to the pyrroline-5-carboxylate reductase family.

The protein localises to the cytoplasm. It carries out the reaction L-proline + NADP(+) = (S)-1-pyrroline-5-carboxylate + NADPH + 2 H(+). The enzyme catalyses L-proline + NAD(+) = (S)-1-pyrroline-5-carboxylate + NADH + 2 H(+). Its pathway is amino-acid biosynthesis; L-proline biosynthesis; L-proline from L-glutamate 5-semialdehyde: step 1/1. Catalyzes the reduction of 1-pyrroline-5-carboxylate (PCA) to L-proline. The polypeptide is Pyrroline-5-carboxylate reductase (Helicobacter pylori (strain J99 / ATCC 700824) (Campylobacter pylori J99)).